We begin with the raw amino-acid sequence, 90 residues long: Conotoxin Vc22.1 (90 aa).

The signal sequence occupies residues 1–18; the sequence is MMTRVFLAMFFLLVLTKG.

This sequence belongs to the E superfamily. Post-translationally, contains 4 disulfide bonds. In terms of tissue distribution, expressed by the venom duct.

The protein resides in the secreted. This chain is Conotoxin Vc22.1, found in Conus victoriae (Queen Victoria cone).